The primary structure comprises 151 residues: Transcriptional regulator MraZ (151 aa).

SpoVT-AbrB domains follow at residues 5 to 52 and 81 to 124; these read ATAV…PLDE and ATEC…SDVE.

Belongs to the MraZ family. In terms of assembly, forms oligomers.

It localises to the cytoplasm. It is found in the nucleoid. The polypeptide is Transcriptional regulator MraZ (Haemophilus influenzae (strain 86-028NP)).